A 156-amino-acid chain; its full sequence is Regulatory protein RecX (156 aa).

This sequence belongs to the RecX family.

The protein resides in the cytoplasm. Functionally, modulates RecA activity. This is Regulatory protein RecX from Pseudomonas putida (strain ATCC 47054 / DSM 6125 / CFBP 8728 / NCIMB 11950 / KT2440).